A 387-amino-acid polypeptide reads, in one-letter code: MTVLKMTDLDLKGKRVLIREDLNVPVKDGQVQSDARIKAALPTIRLALEKGAAVMVCSHLGRPSEGEFSAENSLKPVAEYLSKALGREVPLLADYLDGVEVKAGDLVLFENVRFNKGEKKNADELAQKYAALCDVFVMDAFGTAHRAEGSTHGVARFAKVAAAGPLLAAELDALGKALGNPARPMAAIVAGSKVSTKLDVLNSLAGICDQLIVGGGIANTFLAAAGHKVGKSLYEADLVETAKAIAAKVKVPLPVDVVVAKEFAESAVATVKAIAEVADDDMILDIGPQTAAQFADLLKTSKTILWNGPVGVFEFDQFGEGTRTLANAIADSAAFSIAGGGDTLAAIDKYGIAERISYISTGGGAFLEFVEGKVLPAVEILEQRAKG.

Residues 21-23 (DLN), R36, 59-62 (HLGR), R113, and R146 contribute to the substrate site. ATP contacts are provided by residues K197, E314, and 340 to 343 (GGDT).

Belongs to the phosphoglycerate kinase family. Monomer.

It is found in the cytoplasm. It carries out the reaction (2R)-3-phosphoglycerate + ATP = (2R)-3-phospho-glyceroyl phosphate + ADP. The protein operates within carbohydrate degradation; glycolysis; pyruvate from D-glyceraldehyde 3-phosphate: step 2/5. This chain is Phosphoglycerate kinase, found in Pseudomonas paraeruginosa (strain DSM 24068 / PA7) (Pseudomonas aeruginosa (strain PA7)).